The chain runs to 448 residues: Gluconate permease (448 aa).

12 consecutive transmembrane segments (helical) span residues 2–22 (PLII…GLKL), 23–43 (NTFI…GMPF), 52–72 (AGIG…AMLG), 106–126 (FIIG…PIVF), 134–154 (ISIL…HGFL), 174–194 (VLLY…PLFT), 228–248 (FGIS…ATII), 269–289 (IGNA…TMGI), 302–322 (CSTA…GGAF), 347–367 (IILA…ATVA), 373–393 (GLVI…VLAT), and 428–448 (LLET…SLVV).

The protein belongs to the GntP permease family.

Its subcellular location is the cell membrane. It functions in the pathway carbohydrate acid metabolism; D-gluconate degradation. This is Gluconate permease (gntP) from Bacillus subtilis (strain 168).